Here is a 304-residue protein sequence, read N- to C-terminus: Peroxisome biogenesis factor 2 (304 aa).

Residues 1–14 are Peroxisomal matrix-facing; it reads MAGREKTKSANRVL. The chain crosses the membrane as a helical span at residues 15–41; it reads RISQLDALELNKALEQLVWSQFTQCFH. Over 42–47 the chain is Cytoplasmic; sequence GFKPGL. A helical membrane pass occupies residues 48–73; the sequence is LARFEPEVKACLWLFLWRFTIYSKNA. Residues 74–97 lie on the Peroxisomal matrix side of the membrane; sequence TVGQSVLNIQYKNDFSSNSRYQPP. Residues 98-124 traverse the membrane as a helical segment; it reads SKNQKLWYAVCTIGGRWLEERCYDLFR. Topologically, residues 125–132 are cytoplasmic; it reads NRHLASFG. A helical membrane pass occupies residues 133 to 159; that stretch reads KVKQCMNVMVGLLKLGELINFLIFLQK. Over 160 to 186 the chain is Peroxisomal matrix; sequence GKFATLTERLLGIHSVFCKPQNIREVG. The helical transmembrane segment at 187 to 210 threads the bilayer; that stretch reads FDYMNRELLWHGFAEFLIFLLPLI. At 211–304 the chain is on the cytoplasmic side; the sequence is NIQKFKAKLS…GIEMSEVNAL (94 aa). 8 residues coordinate Zn(2+): C243, C246, C258, H260, C263, C266, C279, and C282. An RING-type zinc finger spans residues 243–283; that stretch reads CALCGEWPTMPHTIGCEHVFCYYCVKSSFLFDMYFTCPKCG.

The protein belongs to the pex2/pex10/pex12 family. Component of the PEX2-PEX10-PEX12 retrotranslocation channel, composed of PEX2, PEX10 and PEX12. Post-translationally, forms intramolecular and intermolecular disulfide bonds in response to reactive oxygen species (ROS), promoting higher stability.

Its subcellular location is the peroxisome membrane. The catalysed reaction is [E2 ubiquitin-conjugating enzyme]-S-ubiquitinyl-L-cysteine + [acceptor protein]-L-cysteine = [E2 ubiquitin-conjugating enzyme]-L-cysteine + [acceptor protein]-S-ubiquitinyl-L-cysteine.. It carries out the reaction S-ubiquitinyl-[E2 ubiquitin-conjugating enzyme]-L-cysteine + [acceptor protein]-L-lysine = [E2 ubiquitin-conjugating enzyme]-L-cysteine + N(6)-ubiquitinyl-[acceptor protein]-L-lysine.. It functions in the pathway protein modification; protein ubiquitination. In terms of biological role, E3 ubiquitin-protein ligase component of a retrotranslocation channel required for peroxisome organization by mediating export of the PEX5 receptor from peroxisomes to the cytosol, thereby promoting PEX5 recycling. The retrotranslocation channel is composed of PEX2, PEX10 and PEX12; each subunit contributing transmembrane segments that coassemble into an open channel that specifically allows the passage of PEX5 through the peroxisomal membrane. PEX2 also regulates peroxisome organization by acting as a E3 ubiquitin-protein ligase. PEX2 ubiquitinates PEX5 during its passage through the retrotranslocation channel: catalyzes monoubiquitination of PEX5 at 'Cys-11', a modification that acts as a signal for PEX5 extraction into the cytosol. Required for pexophagy in response to starvation by mediating ubiquitination of peroxisomal proteins, such as PEX5 and ABCD3/PMP70. Also involved in the response to reactive oxygen species (ROS) by mediating 'Lys-48'-linked polyubiquitination and subsequent degradation of PNPLA2/ATGL, thereby regulating lipolysis. This chain is Peroxisome biogenesis factor 2 (PEX2), found in Cricetulus griseus (Chinese hamster).